Here is a 938-residue protein sequence, read N- to C-terminus: Isoleucine--tRNA ligase (938 aa).

A 'HIGH' region motif is present at residues 58-68 (PYANGSIHIGH). Glu-561 contacts L-isoleucyl-5'-AMP. The short motif at 602–606 (KMSKS) is the 'KMSKS' region element. Position 605 (Lys-605) interacts with ATP. Positions 901, 904, 921, and 924 each coordinate Zn(2+).

This sequence belongs to the class-I aminoacyl-tRNA synthetase family. IleS type 1 subfamily. As to quaternary structure, monomer. It depends on Zn(2+) as a cofactor.

Its subcellular location is the cytoplasm. The enzyme catalyses tRNA(Ile) + L-isoleucine + ATP = L-isoleucyl-tRNA(Ile) + AMP + diphosphate. Catalyzes the attachment of isoleucine to tRNA(Ile). As IleRS can inadvertently accommodate and process structurally similar amino acids such as valine, to avoid such errors it has two additional distinct tRNA(Ile)-dependent editing activities. One activity is designated as 'pretransfer' editing and involves the hydrolysis of activated Val-AMP. The other activity is designated 'posttransfer' editing and involves deacylation of mischarged Val-tRNA(Ile). This is Isoleucine--tRNA ligase from Cronobacter sakazakii (strain ATCC BAA-894) (Enterobacter sakazakii).